Here is a 174-residue protein sequence, read N- to C-terminus: MTQTIFMVGARGAGKTTIGKALAQALGYRFVDTDLFMQQTSQMTVAEVVESEGWDGFRLRESMALQAVTAPKTVVATGGGAVLSSENRAFMRDHGRVIYLRASAAVLAKRLAEDPEEAQRPSLTGKPIVEEILDVLASREALYQDVAHHVLDGTQTPSLVVEQILQMLTGEMVK.

12-17 (GAGKTT) is a binding site for ATP. T16 and D32 together coordinate Mg(2+). Residues D34, R58, and G79 each coordinate substrate. The tract at residues 112–126 (AEDPEEAQRPSLTGK) is LID domain. Residue R120 participates in ATP binding. R139 lines the substrate pocket. Q155 is an ATP binding site.

The protein belongs to the shikimate kinase family. AroL subfamily. As to quaternary structure, monomer. Mg(2+) serves as cofactor.

It is found in the cytoplasm. The enzyme catalyses shikimate + ATP = 3-phosphoshikimate + ADP + H(+). It functions in the pathway metabolic intermediate biosynthesis; chorismate biosynthesis; chorismate from D-erythrose 4-phosphate and phosphoenolpyruvate: step 5/7. In terms of biological role, catalyzes the specific phosphorylation of the 3-hydroxyl group of shikimic acid using ATP as a cosubstrate. The protein is Shikimate kinase 2 of Yersinia pestis bv. Antiqua (strain Antiqua).